The chain runs to 176 residues: Shikimate kinase (176 aa).

ATP is bound at residue 14–19 (GAGKST). Mg(2+) is bound at residue serine 18. Residues aspartate 36, arginine 60, and glycine 83 each contribute to the substrate site. Residue arginine 121 coordinates ATP. Arginine 140 lines the substrate pocket.

It belongs to the shikimate kinase family. Monomer. Mg(2+) is required as a cofactor.

It localises to the cytoplasm. It catalyses the reaction shikimate + ATP = 3-phosphoshikimate + ADP + H(+). It functions in the pathway metabolic intermediate biosynthesis; chorismate biosynthesis; chorismate from D-erythrose 4-phosphate and phosphoenolpyruvate: step 5/7. In terms of biological role, catalyzes the specific phosphorylation of the 3-hydroxyl group of shikimic acid using ATP as a cosubstrate. The chain is Shikimate kinase from Francisella tularensis subsp. tularensis (strain FSC 198).